Here is a 573-residue protein sequence, read N- to C-terminus: MFPCLAHRPWQVLCRVYLQQRAPLSQRSSKISKPCFGWQSRGGVHKLWFSFPDFRVTSLTWTQVQNCSTSGSGKDGSPTRPEEPKTTEKAQAAQPAAKGAGSKPQGLTKAESIQVKVRAVLKKREYGLKYTQNNFITAVRAMNEFCLKPSDLEHLRKIRRRSPHDDTEAFTVFLRSDVEAKALEVWGSQEALARERDQRKEVEREYQENIFRNQKLLKEYKDFWGNTKPRSRKRATFLQGPGKVVMVAICINGLNFFFKLLAWVYTGSASMFSEAIHSLADTCNQALLALGISQSVRNPDAIHPYGFSNMRYIASLISGVGIFMMGAGLSWYHGIMGLLHPQPIESLLWAYCILAGSLVSEGATLLVAINEIKKSARTQGLSFYEYVMQSRDPSTNVVLLEDAAAVLGVVLAAGCMGLTSLTGNPYYDSLGSLGVGTLLGTVSAFLIYTNTEALLGRSIQAEHMQKLTEFLENDPAVRAIHDVKATDMGLSKVRFKAEVDFDGRVVTRSYLEKQDIEQILNEIQQVKTPEELENFMLKHGENIIDTLGAEVDRLEKELKQRNPEVRHVDLEIL.

The segment at 66–108 (NCSTSGSGKDGSPTRPEEPKTTEKAQAAQPAAKGAGSKPQGLT) is disordered. Residues 90–104 (AQAAQPAAKGAGSKP) are compositionally biased toward low complexity. Transmembrane regions (helical) follow at residues 244–264 (VVMV…LAWV), 319–339 (GVGI…MGLL), 347–367 (LLWA…TLLV), 397–417 (VVLL…GCMG), and 429–449 (SLGS…LIYT). Positions 467-471 (LTEFL) match the LXXLL motif motif.

This sequence belongs to the cation diffusion facilitator (CDF) transporter (TC 2.A.4) family. SLC30A subfamily.

It is found in the mitochondrion membrane. The protein localises to the nucleus. It localises to the endoplasmic reticulum. It carries out the reaction Zn(2+)(in) + 2 H(+)(out) = Zn(2+)(out) + 2 H(+)(in). In terms of biological role, mitochondrial proton-coupled zinc ion antiporter mediating the export of zinc from the mitochondria and involved in zinc homeostasis, zinc mobilization as well as mitochondrial morphology and health. In nucleus, may function as a secondary coactivator for nuclear receptors. This chain is Proton-coupled zinc antiporter SLC30A9, mitochondrial (slc30a9), found in Danio rerio (Zebrafish).